Reading from the N-terminus, the 313-residue chain is Ribosomal protein L11 methyltransferase (313 aa).

Residues Thr-154, Gly-179, Asp-201, and Asn-242 each contribute to the S-adenosyl-L-methionine site.

This sequence belongs to the methyltransferase superfamily. PrmA family.

The protein localises to the cytoplasm. The enzyme catalyses L-lysyl-[protein] + 3 S-adenosyl-L-methionine = N(6),N(6),N(6)-trimethyl-L-lysyl-[protein] + 3 S-adenosyl-L-homocysteine + 3 H(+). Functionally, methylates ribosomal protein L11. The chain is Ribosomal protein L11 methyltransferase from Xanthomonas oryzae pv. oryzae (strain MAFF 311018).